A 453-amino-acid chain; its full sequence is Alpha-2B adrenergic receptor (453 aa).

At 1 to 17 (MSGPTMDHQEPYSVQAT) the chain is on the extracellular side. A helical membrane pass occupies residues 18–42 (AAIASAITFLILFTIFGNALVILAV). At 43 to 54 (LTSRSLRAPQNL) the chain is on the cytoplasmic side. A helical transmembrane segment spans residues 55 to 80 (FLVSLAAADILVATLIIPFSLANELL). At 81–90 (GYWYFWRAWC) the chain is on the extracellular side. The cysteines at positions 90 and 169 are disulfide-linked. Residues 91-113 (EVYLALDVLFCTSSIVHLCAISL) traverse the membrane as a helical segment. Residues 114 to 135 (DRYWAVSRALEYNSKRTPRRIK) lie on the Cytoplasmic side of the membrane. Residues 136-158 (CIILTVWLIAAVISLPPLIYKGD) traverse the membrane as a helical segment. The Extracellular segment spans residues 159-174 (QRPEPRGLPQCELNQE). Residues 175-198 (AWYILASSIGSFFAPCLIMILVYL) traverse the membrane as a helical segment. The Cytoplasmic portion of the chain corresponds to 199-375 (RIYVIAKRSH…LSREKRFTFV (177 aa)). Residues 213-331 (GAKRGSGEGE…PASVCNPPLQ (119 aa)) are disordered. The segment covering 287 to 297 (GQGQKKGTSGA) has biased composition (polar residues). Acidic residues predominate over residues 300–314 (EEGDEEDEEEVEECE). The chain crosses the membrane as a helical span at residues 376-399 (LAVVIGVFVVCWFPFFFSYSLGAI). Residues 400-408 (CPQHCKVPH) are Extracellular-facing. Residues 409-432 (GLFQFFFWIGYCNSSLNPVIYTVF) form a helical membrane-spanning segment. Over 433-453 (NQDFRRAFRRILCRPWTQTGW) the chain is Cytoplasmic. A lipid anchor (S-palmitoyl cysteine) is attached at C445.

The protein belongs to the G-protein coupled receptor 1 family. Adrenergic receptor subfamily. ADRA2B sub-subfamily. In terms of assembly, interacts with RAB26. Interacts with PPP1R9B. Interacts with GGA1, GGA2 and GGA3.

Its subcellular location is the cell membrane. In terms of biological role, alpha-2 adrenergic receptors mediate the catecholamine-induced inhibition of adenylate cyclase through the action of G proteins. The chain is Alpha-2B adrenergic receptor (Adra2b) from Rattus norvegicus (Rat).